Consider the following 266-residue polypeptide: Protein PYRICULARIA ORYZAE RESISTANCE 21 (266 aa).

In terms of domain architecture, HMA spans 1–68 (MGILVILVDL…IWCKAGKIIK (68 aa)). A metal cation-binding residues include cysteine 12 and cysteine 15. The tract at residues 129-156 (CEKPKPCEKPPPCKPEEPPKPPPEKPPP) is disordered. Basic and acidic residues predominate over residues 142–156 (KPEEPPKPPPEKPPP).

Involved in defense responses. Contributes to slowing defense responses toward Magnaporthe oryzae. This Oryza sativa subsp. japonica (Rice) protein is Protein PYRICULARIA ORYZAE RESISTANCE 21.